Here is a 431-residue protein sequence, read N- to C-terminus: Acyl transferase 8 (431 aa).

Histidine 169 functions as the Proton acceptor in the catalytic mechanism. 3 disordered regions span residues 220-247, 260-313, and 331-400; these read VADA…RAPA, HHAG…DHLR, and GLRV…PPPT. Over residues 224–234 the composition is skewed to low complexity; that stretch reads RGGVRPGVPRP. Over residues 264 to 273 the composition is skewed to gly residues; sequence DGGGGGGGGR. Composition is skewed to basic residues over residues 297–306 and 335–380; these read ERRRRRRRGR and GRPR…RRLP. The segment covering 381 to 394 has biased composition (basic and acidic residues); that stretch reads QRHDAPRLITERAH.

This sequence belongs to the plant acyltransferase family.

In terms of biological role, involved in the incorporation of ferulate into the cell wall. May act as arabinoxylan feruloyl transferase. The sequence is that of Acyl transferase 8 from Oryza sativa subsp. japonica (Rice).